We begin with the raw amino-acid sequence, 244 residues long: Eukaryotic translation initiation factor 6 (244 aa).

Ser174 and Ser175 each carry phosphoserine; by CK1.

The protein belongs to the eIF-6 family. In terms of assembly, monomer. Associates with the 60S ribosomal subunit. In terms of processing, phosphorylation at Ser-174 and Ser-175 promotes nuclear export.

The protein resides in the cytoplasm. Its subcellular location is the nucleus. The protein localises to the nucleolus. Binds to the 60S ribosomal subunit and prevents its association with the 40S ribosomal subunit to form the 80S initiation complex in the cytoplasm. Is also involved in ribosome biogenesis. Associates with pre-60S subunits in the nucleus and is involved in its nuclear export. The polypeptide is Eukaryotic translation initiation factor 6 (tif6) (Schizosaccharomyces pombe (strain 972 / ATCC 24843) (Fission yeast)).